We begin with the raw amino-acid sequence, 240 residues long: Pyridoxine 5'-phosphate synthase (240 aa).

Position 7 (asparagine 7) interacts with 3-amino-2-oxopropyl phosphate. 9-10 serves as a coordination point for 1-deoxy-D-xylulose 5-phosphate; it reads DH. Arginine 18 contributes to the 3-amino-2-oxopropyl phosphate binding site. Catalysis depends on histidine 43, which acts as the Proton acceptor. 2 residues coordinate 1-deoxy-D-xylulose 5-phosphate: arginine 45 and histidine 50. The active-site Proton acceptor is glutamate 70. Threonine 100 contributes to the 1-deoxy-D-xylulose 5-phosphate binding site. Histidine 191 (proton donor) is an active-site residue. 3-amino-2-oxopropyl phosphate contacts are provided by residues glycine 192 and 213-214; that span reads GH.

The protein belongs to the PNP synthase family. As to quaternary structure, homooctamer; tetramer of dimers.

It localises to the cytoplasm. It catalyses the reaction 3-amino-2-oxopropyl phosphate + 1-deoxy-D-xylulose 5-phosphate = pyridoxine 5'-phosphate + phosphate + 2 H2O + H(+). Its pathway is cofactor biosynthesis; pyridoxine 5'-phosphate biosynthesis; pyridoxine 5'-phosphate from D-erythrose 4-phosphate: step 5/5. Functionally, catalyzes the complicated ring closure reaction between the two acyclic compounds 1-deoxy-D-xylulose-5-phosphate (DXP) and 3-amino-2-oxopropyl phosphate (1-amino-acetone-3-phosphate or AAP) to form pyridoxine 5'-phosphate (PNP) and inorganic phosphate. This chain is Pyridoxine 5'-phosphate synthase, found in Synechococcus elongatus (strain ATCC 33912 / PCC 7942 / FACHB-805) (Anacystis nidulans R2).